The chain runs to 263 residues: Purine nucleoside phosphorylase SE_0862 (263 aa).

Residues His79, Cys124, and His141 each coordinate Zn(2+).

It belongs to the purine nucleoside phosphorylase YfiH/LACC1 family. As to quaternary structure, homodimer. Cu(2+) is required as a cofactor. The cofactor is Zn(2+).

The enzyme catalyses adenosine + phosphate = alpha-D-ribose 1-phosphate + adenine. The catalysed reaction is S-methyl-5'-thioadenosine + phosphate = 5-(methylsulfanyl)-alpha-D-ribose 1-phosphate + adenine. It carries out the reaction inosine + phosphate = alpha-D-ribose 1-phosphate + hypoxanthine. It catalyses the reaction adenosine + H2O + H(+) = inosine + NH4(+). In terms of biological role, purine nucleoside enzyme that catalyzes the phosphorolysis of adenosine and inosine nucleosides, yielding D-ribose 1-phosphate and the respective free bases, adenine and hypoxanthine. Also catalyzes the phosphorolysis of S-methyl-5'-thioadenosine into adenine and S-methyl-5-thio-alpha-D-ribose 1-phosphate. Also has adenosine deaminase activity. In Staphylococcus epidermidis (strain ATCC 12228 / FDA PCI 1200), this protein is Purine nucleoside phosphorylase SE_0862.